The following is a 404-amino-acid chain: Phosphoglycerate kinase (404 aa).

Substrate is bound by residues 26 to 28, R41, 64 to 67, R124, and R161; these read DFN and HLGR. ATP is bound by residues K212, G301, E332, and 359–362; that span reads GGDS.

It belongs to the phosphoglycerate kinase family. In terms of assembly, monomer.

It is found in the cytoplasm. The enzyme catalyses (2R)-3-phosphoglycerate + ATP = (2R)-3-phospho-glyceroyl phosphate + ADP. It participates in carbohydrate degradation; glycolysis; pyruvate from D-glyceraldehyde 3-phosphate: step 2/5. The polypeptide is Phosphoglycerate kinase (Mesomycoplasma hyopneumoniae (strain 232) (Mycoplasma hyopneumoniae)).